The chain runs to 311 residues: Methionyl-tRNA formyltransferase (311 aa).

110–113 (SLLP) is a (6S)-5,6,7,8-tetrahydrofolate binding site.

It belongs to the Fmt family.

It carries out the reaction L-methionyl-tRNA(fMet) + (6R)-10-formyltetrahydrofolate = N-formyl-L-methionyl-tRNA(fMet) + (6S)-5,6,7,8-tetrahydrofolate + H(+). Attaches a formyl group to the free amino group of methionyl-tRNA(fMet). The formyl group appears to play a dual role in the initiator identity of N-formylmethionyl-tRNA by promoting its recognition by IF2 and preventing the misappropriation of this tRNA by the elongation apparatus. This is Methionyl-tRNA formyltransferase from Sulfurihydrogenibium sp. (strain YO3AOP1).